Reading from the N-terminus, the 24-residue chain is Conotoxin PIVE (24 aa).

3 disulfide bridges follow: cysteine 2–cysteine 10, cysteine 3–cysteine 15, and cysteine 13–cysteine 19. Lysine 24 bears the Lysine amide mark.

The protein belongs to the conotoxin A superfamily. As to expression, expressed by the venom duct.

Its subcellular location is the secreted. Its function is as follows. Probable neurotoxin with ion channel inhibitor activity. In vivo, elicits dose-dependently excitatory activity upon injection into fish. Its action is slowly reversible. This Conus purpurascens (Purple cone) protein is Conotoxin PIVE.